We begin with the raw amino-acid sequence, 515 residues long: uncharacterized protein (515 aa).

The tract at residues 146–171 is disordered; sequence SSEVDRNSETEGTREENSNTSDWDEQ. Basic and acidic residues predominate over residues 148-162; it reads EVDRNSETEGTREEN.

Its subcellular location is the cytoplasm. It is found in the nucleus. This is an uncharacterized protein from Schizosaccharomyces pombe (strain 972 / ATCC 24843) (Fission yeast).